A 145-amino-acid polypeptide reads, in one-letter code: Large ribosomal subunit protein uL11 (145 aa).

It belongs to the universal ribosomal protein uL11 family. As to quaternary structure, part of the ribosomal stalk of the 50S ribosomal subunit. Interacts with L10 and the large rRNA to form the base of the stalk. L10 forms an elongated spine to which L12 dimers bind in a sequential fashion forming a multimeric L10(L12)X complex. Post-translationally, one or more lysine residues are methylated.

Its function is as follows. Forms part of the ribosomal stalk which helps the ribosome interact with GTP-bound translation factors. The protein is Large ribosomal subunit protein uL11 of Rickettsia felis (strain ATCC VR-1525 / URRWXCal2) (Rickettsia azadi).